Consider the following 262-residue polypeptide: MNGPAGLAYLDRRERILKLGESFEKQPRCAFHTVRYDFKPASVDASCEGNLEVGKGEQVTITLPNIEGSTPPVTVFKGSKRPYLKECILIINHDTGECRLEKLSSNITVKKTRGEGSSKIQCRLEQQQQQMWNPPRTSNLVQHSPSEDKLSPTSLMDDIERELKAEASLMDQMSSCDSSSDSRSSSSSSSEDSSSDSEDDDRSSPSGPRRYSSEHPSVSAGPQYRTSDADTTCNRLYDNSALLMSTLRSDLQLSESDSDSED.

Residues 17-104 (LKLGESFEKQ…TGECRLEKLS (88 aa)) are necessary for interaction with ELL. A compositionally biased stretch (polar residues) spans 124–144 (LEQQQQQMWNPPRTSNLVQHS). Disordered stretches follow at residues 124–154 (LEQQ…SPTS) and 170–232 (MDQM…ADTT). Serine 146, serine 151, and serine 154 each carry phosphoserine. Positions 174–192 (SSCDSSSDSRSSSSSSSED) are enriched in low complexity. Residues 177 to 262 (DSSSDSRSSS…LSESDSDSED (86 aa)) form a necessary for transactivation activity region. The interval 248 to 262 (RSDLQLSESDSDSED) is necessary for interaction with TCEA1 and transactivation activity.

It belongs to the EAF family. Component of the super elongation complex (SEC), at least composed of EAF1, EAF2, CDK9, MLLT3/AF9, AFF (AFF1 or AFF4), the P-TEFb complex and ELL (ELL, ELL2 or ELL3). Interacts with ELL, ELL2 and TCEA1.

The protein resides in the nucleus speckle. Functionally, acts as a transcriptional transactivator of ELL, ELL2 and TCEA1 elongation activities. Potent inducer of apoptosis in prostatic and non-prostatic cell lines. The sequence is that of ELL-associated factor 2 (Eaf2) from Rattus norvegicus (Rat).